Here is a 394-residue protein sequence, read N- to C-terminus: Elongation factor Tu 2 (394 aa).

Residues 10–204 (KPHVNVGTIG…ALDSYIPQPE (195 aa)) enclose the tr-type G domain. The G1 stretch occupies residues 19–26 (GHVDHGKT). Residue 19–26 (GHVDHGKT) participates in GTP binding. Thr-26 contributes to the Mg(2+) binding site. Positions 60-64 (GITIN) are G2. Positions 81 to 84 (DCPG) are G3. GTP is bound by residues 81–85 (DCPGH) and 136–139 (NKCD). The interval 136 to 139 (NKCD) is G4. Residues 174–176 (SAL) form a G5 region.

It belongs to the TRAFAC class translation factor GTPase superfamily. Classic translation factor GTPase family. EF-Tu/EF-1A subfamily. As to quaternary structure, monomer.

The protein resides in the cytoplasm. It carries out the reaction GTP + H2O = GDP + phosphate + H(+). Functionally, GTP hydrolase that promotes the GTP-dependent binding of aminoacyl-tRNA to the A-site of ribosomes during protein biosynthesis. The polypeptide is Elongation factor Tu 2 (Yersinia pestis bv. Antiqua (strain Antiqua)).